A 180-amino-acid polypeptide reads, in one-letter code: Large ribosomal subunit protein uL5 (180 aa).

Belongs to the universal ribosomal protein uL5 family. As to quaternary structure, part of the 50S ribosomal subunit; part of the 5S rRNA/L5/L18/L25 subcomplex. Contacts the 5S rRNA and the P site tRNA. Forms a bridge to the 30S subunit in the 70S ribosome.

In terms of biological role, this is one of the proteins that bind and probably mediate the attachment of the 5S RNA into the large ribosomal subunit, where it forms part of the central protuberance. In the 70S ribosome it contacts protein S13 of the 30S subunit (bridge B1b), connecting the 2 subunits; this bridge is implicated in subunit movement. Contacts the P site tRNA; the 5S rRNA and some of its associated proteins might help stabilize positioning of ribosome-bound tRNAs. The sequence is that of Large ribosomal subunit protein uL5 from Rippkaea orientalis (strain PCC 8801 / RF-1) (Cyanothece sp. (strain PCC 8801)).